We begin with the raw amino-acid sequence, 169 residues long: ATP synthase subunit b (169 aa).

A helical transmembrane segment spans residues 13–33; sequence LFLFQLINFLIIVFILKKFLF.

This sequence belongs to the ATPase B chain family. As to quaternary structure, F-type ATPases have 2 components, F(1) - the catalytic core - and F(0) - the membrane proton channel. F(1) has five subunits: alpha(3), beta(3), gamma(1), delta(1), epsilon(1). F(0) has three main subunits: a(1), b(2) and c(10-14). The alpha and beta chains form an alternating ring which encloses part of the gamma chain. F(1) is attached to F(0) by a central stalk formed by the gamma and epsilon chains, while a peripheral stalk is formed by the delta and b chains.

The protein resides in the cell inner membrane. Functionally, f(1)F(0) ATP synthase produces ATP from ADP in the presence of a proton or sodium gradient. F-type ATPases consist of two structural domains, F(1) containing the extramembraneous catalytic core and F(0) containing the membrane proton channel, linked together by a central stalk and a peripheral stalk. During catalysis, ATP synthesis in the catalytic domain of F(1) is coupled via a rotary mechanism of the central stalk subunits to proton translocation. Its function is as follows. Component of the F(0) channel, it forms part of the peripheral stalk, linking F(1) to F(0). In Endomicrobium trichonymphae, this protein is ATP synthase subunit b.